Consider the following 438-residue polypeptide: Adenosylhomocysteinase (438 aa).

Substrate-binding residues include Thr61, Asp137, and Glu162. 163–165 is an NAD(+) binding site; that stretch reads TTT. Substrate is bound by residues Lys192 and Asp196. Residues Asn197, 226-231, Glu249, Asn284, 305-307, and Asn352 contribute to the NAD(+) site; these read GYGDVG and IGH.

It belongs to the adenosylhomocysteinase family. The cofactor is NAD(+).

It localises to the cytoplasm. It carries out the reaction S-adenosyl-L-homocysteine + H2O = L-homocysteine + adenosine. The protein operates within amino-acid biosynthesis; L-homocysteine biosynthesis; L-homocysteine from S-adenosyl-L-homocysteine: step 1/1. May play a key role in the regulation of the intracellular concentration of adenosylhomocysteine. The sequence is that of Adenosylhomocysteinase from Flavobacterium psychrophilum (strain ATCC 49511 / DSM 21280 / CIP 103535 / JIP02/86).